Reading from the N-terminus, the 122-residue chain is Replication factor A protein 3 (122 aa).

It belongs to the replication factor A protein 3 family. In terms of assembly, component of the heterotrimeric canonical replication protein A complex (RPA). Post-translationally, the N-terminus is blocked.

The protein localises to the nucleus. In terms of biological role, as part of the replication protein A (RPA/RP-A), a single-stranded DNA-binding heterotrimeric complex, may play an essential role in DNA replication, recombination and repair. Binds and stabilizes single-stranded DNA intermediates, preventing complementary DNA reannealing and recruiting different proteins involved in DNA metabolism. Stimulates the activity of a cognate strand exchange protein (SEP1). This Saccharomyces cerevisiae (strain ATCC 204508 / S288c) (Baker's yeast) protein is Replication factor A protein 3 (RFA3).